The primary structure comprises 235 residues: Ribonuclease 3 (235 aa).

The RNase III domain maps to 7 to 131 (LSALEARIGH…IIGAVFLDGG (125 aa)). A Mg(2+)-binding site is contributed by Glu45. Residue Asp49 is part of the active site. Positions 117 and 120 each coordinate Mg(2+). Residue Glu120 is part of the active site. Residues 156-225 (DPKTTLQEWA…AAAFLTREKI (70 aa)) form the DRBM domain.

The protein belongs to the ribonuclease III family. Homodimer. Requires Mg(2+) as cofactor.

The protein resides in the cytoplasm. It catalyses the reaction Endonucleolytic cleavage to 5'-phosphomonoester.. Functionally, digests double-stranded RNA. Involved in the processing of primary rRNA transcript to yield the immediate precursors to the large and small rRNAs (23S and 16S). Processes some mRNAs, and tRNAs when they are encoded in the rRNA operon. Processes pre-crRNA and tracrRNA of type II CRISPR loci if present in the organism. This Methylocella silvestris (strain DSM 15510 / CIP 108128 / LMG 27833 / NCIMB 13906 / BL2) protein is Ribonuclease 3.